A 159-amino-acid chain; its full sequence is Fimbrial protein EcpB (159 aa).

Residues 1–6 constitute a propeptide, leader sequence; the sequence is MYKQKG. Position 7 is an N-methylphenylalanine (F7). A helical transmembrane segment spans residues 7 to 29; the sequence is FTLIELMIVIAIIGILAAIALPL. C137 and C156 form a disulfide bridge.

Belongs to the N-Me-Phe pilin family.

It is found in the fimbrium. Its subcellular location is the membrane. This chain is Fimbrial protein EcpB (ecpB), found in Eikenella corrodens.